Here is a 200-residue protein sequence, read N- to C-terminus: Transgelin (200 aa).

S2 carries the N-acetylserine modification. Position 11 is a phosphoserine (S11). Residues 26–136 form the Calponin-homology (CH) domain; sequence PEAIQNIKIW…QTLKSLSRYA (111 aa). A disordered region spans residues 144–168; the sequence is FPVLGPQLSTKKPRPPVKSKPKHLQ. The tract at residues 151 to 164 is interaction with SH3 domain of ABP1; that stretch reads LSTKKPRPPVKSKP. Positions 154–165 are enriched in basic residues; sequence KKPRPPVKSKPK.

As to quaternary structure, binds to actin. Interacts with ABP1.

Its subcellular location is the cytoplasm. It localises to the cytoskeleton. The protein resides in the actin patch. Functionally, has actin-binding and actin-bundling activity. Stabilizes actin filaments against disassembly. The chain is Transgelin (SCP1) from Saccharomyces cerevisiae (strain ATCC 204508 / S288c) (Baker's yeast).